Consider the following 94-residue polypeptide: Co-chaperonin GroES (94 aa).

This sequence belongs to the GroES chaperonin family. In terms of assembly, heptamer of 7 subunits arranged in a ring. Interacts with the chaperonin GroEL.

The protein resides in the cytoplasm. In terms of biological role, together with the chaperonin GroEL, plays an essential role in assisting protein folding. The GroEL-GroES system forms a nano-cage that allows encapsulation of the non-native substrate proteins and provides a physical environment optimized to promote and accelerate protein folding. GroES binds to the apical surface of the GroEL ring, thereby capping the opening of the GroEL channel. This Lactobacillus acidophilus (strain ATCC 700396 / NCK56 / N2 / NCFM) protein is Co-chaperonin GroES.